A 420-amino-acid chain; its full sequence is Vasopressin V1a receptor (420 aa).

The interval methionine 1–valine 45 is disordered. Topologically, residues methionine 1–glutamate 54 are extracellular. Asparagine 27 is a glycosylation site (N-linked (GlcNAc...) asparagine). The segment covering alanine 32 to valine 45 has biased composition (basic and acidic residues). The helical transmembrane segment at isoleucine 55–alanine 75 threads the bilayer. Residues leucine 76–histidine 92 lie on the Cytoplasmic side of the membrane. The chain crosses the membrane as a helical span at residues leucine 93–isoleucine 113. The Extracellular portion of the chain corresponds to threonine 114 to arginine 125. The cysteines at positions 124 and 205 are disulfide-linked. The chain crosses the membrane as a helical span at residues valine 126–threonine 146. Over alanine 147–arginine 168 the chain is Cytoplasmic. The helical transmembrane segment at leucine 169–phenylalanine 189 threads the bilayer. Residues serine 190 to glycine 225 are Extracellular-facing. Asparagine 198 is a glycosylation site (N-linked (GlcNAc...) asparagine). Residues valine 226–tryptophan 246 form a helical membrane-spanning segment. Residues arginine 247–methionine 294 are Cytoplasmic-facing. A helical membrane pass occupies residues threonine 295 to tryptophan 315. The Extracellular segment spans residues serine 316–serine 331. The helical transmembrane segment at isoleucine 332–phenylalanine 352 threads the bilayer. The Cytoplasmic portion of the chain corresponds to phenylalanine 353–threonine 420. 2 S-palmitoyl cysteine lipidation sites follow: cysteine 367 and cysteine 368. The segment at aspartate 379–arginine 411 is disordered. The segment covering arginine 385–tryptophan 403 has biased composition (polar residues). A Phosphoserine modification is found at serine 406.

Belongs to the G-protein coupled receptor 1 family. Vasopressin/oxytocin receptor subfamily.

The protein resides in the cell membrane. Its function is as follows. Receptor for arginine vasopressin. The activity of this receptor is mediated by G proteins which activate a phosphatidyl-inositol-calcium second messenger system. Involved in social memory formation. This Microtus montanus (Montane vole) protein is Vasopressin V1a receptor (Avpr1a).